The primary structure comprises 170 residues: ATP synthase subunit b (170 aa).

A helical membrane pass occupies residues phenylalanine 15–proline 37.

This sequence belongs to the ATPase B chain family. As to quaternary structure, F-type ATPases have 2 components, F(1) - the catalytic core - and F(0) - the membrane proton channel. F(1) has five subunits: alpha(3), beta(3), gamma(1), delta(1), epsilon(1). F(0) has four main subunits: a(1), b(1), b'(1) and c(10-14). The alpha and beta chains form an alternating ring which encloses part of the gamma chain. F(1) is attached to F(0) by a central stalk formed by the gamma and epsilon chains, while a peripheral stalk is formed by the delta, b and b' chains.

It localises to the cellular thylakoid membrane. Functionally, f(1)F(0) ATP synthase produces ATP from ADP in the presence of a proton or sodium gradient. F-type ATPases consist of two structural domains, F(1) containing the extramembraneous catalytic core and F(0) containing the membrane proton channel, linked together by a central stalk and a peripheral stalk. During catalysis, ATP synthesis in the catalytic domain of F(1) is coupled via a rotary mechanism of the central stalk subunits to proton translocation. Its function is as follows. Component of the F(0) channel, it forms part of the peripheral stalk, linking F(1) to F(0). The sequence is that of ATP synthase subunit b from Prochlorococcus marinus (strain MIT 9312).